Reading from the N-terminus, the 451-residue chain is Probable carboxypeptidase PMAA_093910 (451 aa).

Residues 1 to 19 (MKVSSLLPSVLLLVGATRA) form the signal peptide. The N-linked (GlcNAc...) asparagine glycan is linked to Asn149. Asp171 is a Zn(2+) binding site. Residue Glu203 is the Proton acceptor of the active site. Glu204 is a Zn(2+) binding site. The N-linked (GlcNAc...) asparagine glycan is linked to Asn354.

Belongs to the peptidase M20A family. Requires Zn(2+) as cofactor.

It localises to the secreted. This Talaromyces marneffei (strain ATCC 18224 / CBS 334.59 / QM 7333) (Penicillium marneffei) protein is Probable carboxypeptidase PMAA_093910.